The chain runs to 1372 residues: DNA-directed RNA polymerase subunit beta (1372 aa).

The protein belongs to the RNA polymerase beta chain family. The RNAP catalytic core consists of 2 alpha, 1 beta, 1 beta' and 1 omega subunit. When a sigma factor is associated with the core the holoenzyme is formed, which can initiate transcription.

The enzyme catalyses RNA(n) + a ribonucleoside 5'-triphosphate = RNA(n+1) + diphosphate. In terms of biological role, DNA-dependent RNA polymerase catalyzes the transcription of DNA into RNA using the four ribonucleoside triphosphates as substrates. The protein is DNA-directed RNA polymerase subunit beta of Bradyrhizobium sp. (strain ORS 278).